The primary structure comprises 363 residues: Peptide chain release factor 2 (363 aa).

Glutamine 251 is modified (N5-methylglutamine).

It belongs to the prokaryotic/mitochondrial release factor family. In terms of processing, methylated by PrmC. Methylation increases the termination efficiency of RF2.

Its subcellular location is the cytoplasm. Functionally, peptide chain release factor 2 directs the termination of translation in response to the peptide chain termination codons UGA and UAA. The chain is Peptide chain release factor 2 (prfB) from Helicobacter pylori (strain ATCC 700392 / 26695) (Campylobacter pylori).